We begin with the raw amino-acid sequence, 417 residues long: MTFSLFGDKFTRHSGITLLMEDLNDGLRTPGAIMLGGGNPAQIPEMQDYFQTLLTDMLESGKATDALCNYDGPQGKTELLTLLAGMLREKLGWDIEPQNIALTNGSQSAFFYLFNLFAGRRADGRVKKVLFPLAPEYIGYADAGLEEDLFVSARPNIELLPEGQFKYHVDFEHLHIGEETGMICVSRPTNPTGNVITDEELLKLDALANQHGIPLVIDNAYGVPFPGIIFSEARPLWNPNIVLCMSLSKLGLPGSRCGIIIANEKIITAITNMNGIISLAPGGIGPAMMCEMIKRNDLLRLSETVIKPFYYQRVQETIAIIRRYLPENRCLIHKPEGAIFLWLWFKDLPITTKQLYQRLKARGVLMVPGHNFFPGLDKPWPHTHQCMRMNYVPEPEKIEAGVKILAEEIERAWAESH.

An N6-(pyridoxal phosphate)lysine modification is found at K249.

This sequence belongs to the class-I pyridoxal-phosphate-dependent aminotransferase family. As to quaternary structure, homodimer. Pyridoxal 5'-phosphate is required as a cofactor.

It localises to the cytoplasm. It catalyses the reaction L-valine + pyruvate = 3-methyl-2-oxobutanoate + L-alanine. Its function is as follows. Involved in the biosynthesis of alanine. The chain is Valine--pyruvate aminotransferase (avtA) from Escherichia coli (strain K12).